The primary structure comprises 164 residues: General odorant-binding protein 1 (164 aa).

The signal sequence occupies residues Met-1–Thr-18. Disulfide bonds link Cys-37–Cys-72, Cys-68–Cys-126, and Cys-115–Cys-135.

This sequence belongs to the PBP/GOBP family. As to quaternary structure, homodimer. Antenna.

Present in the aqueous fluid surrounding olfactory sensory dendrites and are thought to aid in the capture and transport of hydrophobic odorants into and through this fluid. This chain is General odorant-binding protein 1, found in Bombyx mori (Silk moth).